The following is a 462-amino-acid chain: UDP-N-acetylmuramoylalanine--D-glutamate ligase (462 aa).

Residue 109–115 (GTDGKST) participates in ATP binding.

The protein belongs to the MurCDEF family.

Its subcellular location is the cytoplasm. It carries out the reaction UDP-N-acetyl-alpha-D-muramoyl-L-alanine + D-glutamate + ATP = UDP-N-acetyl-alpha-D-muramoyl-L-alanyl-D-glutamate + ADP + phosphate + H(+). The protein operates within cell wall biogenesis; peptidoglycan biosynthesis. In terms of biological role, cell wall formation. Catalyzes the addition of glutamate to the nucleotide precursor UDP-N-acetylmuramoyl-L-alanine (UMA). The protein is UDP-N-acetylmuramoylalanine--D-glutamate ligase of Leptospira borgpetersenii serovar Hardjo-bovis (strain JB197).